A 396-amino-acid chain; its full sequence is MKVPRLLLALGGLASIHIASALPQGAVERDMHATSAVVHGGNVKTKFPSTTGLKFTIDGETGYFAGSNSYWIGFLTNNADVDLVFQHMKESGLKILRVWGFNDVNTKPATGTVWYQLHANGTSTINTGPDGLQRLDYVVHSAERHGIKLIINFVNNWNDYGGINSYLQAYGGASNEDFYNSEPMQKAYRAYIKEVVSRYIDSPAVFAWELANEPRCKGCDTSVLHSWIEKTSRYIKSLDKKHMVTTGEEGFGLDLMSDGSYPFTYVEGGNFTDTLSIPTIDFGTFHLYPSSWGTTNDWGNLWVEAHGAACKAAGKPRLFEEYGVTADHCALEKPWQTTALKTKGVSGDLYWQYGDTLSTGPSPDDGNTFYYGTDEFDCLVSDHVAAIDEMEKHGRH.

Positions 1 to 21 (MKVPRLLLALGGLASIHIASA) are cleaved as a signal peptide. Trp99 contacts substrate. Asn120 carries an N-linked (GlcNAc...) asparagine glycan. Residue Asn212 coordinates substrate. Catalysis depends on Glu213, which acts as the Proton donor. An N-linked (GlcNAc...) asparagine glycan is attached at Asn270. Tyr288 serves as a coordination point for substrate. Glu321 serves as the catalytic Nucleophile. A substrate-binding site is contributed by Trp351.

The protein belongs to the glycosyl hydrolase 5 (cellulase A) family.

It localises to the secreted. It carries out the reaction Random hydrolysis of (1-&gt;4)-beta-D-mannosidic linkages in mannans, galactomannans and glucomannans.. Endo-1,4-mannanase, a crucial enzyme for depolymerization of seed galactomannans and wood galactoglucomannans. The sequence is that of Probable mannan endo-1,4-beta-mannosidase A-2 (manA-2) from Aspergillus terreus (strain NIH 2624 / FGSC A1156).